Here is a 437-residue protein sequence, read N- to C-terminus: Transmembrane protein with metallophosphoesterase domain (437 aa).

Transmembrane regions (helical) follow at residues 7-27 (LSAE…MLIS), 41-61 (ALLF…LGSL), 87-107 (IIVL…FFLV), 116-136 (LLSF…FVFG), and 164-184 (VLAL…AAQP). A divalent metal cation contacts are provided by Asp-211, His-213, Asp-243, Asn-274, His-376, and His-378.

This sequence belongs to the metallophosphoesterase superfamily. LOC643853 family. It depends on a divalent metal cation as a cofactor.

It is found in the membrane. The polypeptide is Transmembrane protein with metallophosphoesterase domain (tmppe) (Danio rerio (Zebrafish)).